The sequence spans 431 residues: 23S rRNA (uracil(1939)-C(5))-methyltransferase RlmD (431 aa).

Residues Lys-8–Arg-68 enclose the TRAM domain. [4Fe-4S] cluster-binding residues include Cys-81, Cys-87, Cys-90, and Cys-162. The S-adenosyl-L-methionine site is built by Gln-265, Phe-294, Asn-299, Glu-315, Asn-342, and Asp-363. Residue Cys-389 is the Nucleophile of the active site.

Belongs to the class I-like SAM-binding methyltransferase superfamily. RNA M5U methyltransferase family. RlmD subfamily.

The enzyme catalyses uridine(1939) in 23S rRNA + S-adenosyl-L-methionine = 5-methyluridine(1939) in 23S rRNA + S-adenosyl-L-homocysteine + H(+). Its function is as follows. Catalyzes the formation of 5-methyl-uridine at position 1939 (m5U1939) in 23S rRNA. This is 23S rRNA (uracil(1939)-C(5))-methyltransferase RlmD from Enterobacter sp. (strain 638).